The primary structure comprises 88 residues: Large ribosomal subunit protein eL37 (88 aa).

The Zn(2+) site is built by Cys19, Cys22, Cys34, and Cys37. The C4-type zinc-finger motif lies at 19–37 (CNRCGKRSFHVQKKTCASC).

It belongs to the eukaryotic ribosomal protein eL37 family. It depends on Zn(2+) as a cofactor.

Its function is as follows. Binds to the 23S rRNA. The sequence is that of Large ribosomal subunit protein eL37 (RPL37) from Debaryomyces hansenii (strain ATCC 36239 / CBS 767 / BCRC 21394 / JCM 1990 / NBRC 0083 / IGC 2968) (Yeast).